A 460-amino-acid polypeptide reads, in one-letter code: Centrosomal protein CEP57L1 (460 aa).

The residue at position 49 (Ser-49) is a Phosphoserine. Coiled coils occupy residues 51 to 228 (NSQA…EISK) and 317 to 384 (ISIC…LKKH). Residues 399–410 (KMSEASGIQQED) show a composition bias toward polar residues. A disordered region spans residues 399 to 423 (KMSEASGIQQEDSYPKGSKNIKNSP).

The protein belongs to the translokin family.

It is found in the cytoplasm. The protein localises to the cytoskeleton. Its subcellular location is the microtubule organizing center. It localises to the centrosome. Functionally, centrosomal protein which may be required for microtubule attachment to centrosomes. This chain is Centrosomal protein CEP57L1 (CEP57L1), found in Homo sapiens (Human).